Here is a 423-residue protein sequence, read N- to C-terminus: Putative competence-damage inducible protein (423 aa).

The protein belongs to the CinA family.

This Streptococcus pyogenes serotype M2 (strain MGAS10270) protein is Putative competence-damage inducible protein.